We begin with the raw amino-acid sequence, 320 residues long: GDSL esterase/lipase At3g43570 (320 aa).

The N-terminal stretch at 1-19 (MKIQIIWLTLVLIVVEANA) is a signal peptide. N-linked (GlcNAc...) asparagine glycosylation is present at N25. S37 (nucleophile) is an active-site residue. N287 is a glycosylation site (N-linked (GlcNAc...) asparagine). Catalysis depends on residues D295 and H298.

Belongs to the 'GDSL' lipolytic enzyme family.

It localises to the secreted. The polypeptide is GDSL esterase/lipase At3g43570 (Arabidopsis thaliana (Mouse-ear cress)).